The following is a 76-amino-acid chain: Large ribosomal subunit protein bL28 (76 aa).

The protein belongs to the bacterial ribosomal protein bL28 family.

The chain is Large ribosomal subunit protein bL28 from Opitutus terrae (strain DSM 11246 / JCM 15787 / PB90-1).